The primary structure comprises 175 residues: Ribosome maturation factor RimM (175 aa).

The 77-residue stretch at 96–172 (PDTYYDHQLE…LIEIDPPDGL (77 aa)) folds into the PRC barrel domain.

Belongs to the RimM family. As to quaternary structure, binds ribosomal protein uS19.

The protein localises to the cytoplasm. Its function is as follows. An accessory protein needed during the final step in the assembly of 30S ribosomal subunit, possibly for assembly of the head region. Essential for efficient processing of 16S rRNA. May be needed both before and after RbfA during the maturation of 16S rRNA. It has affinity for free ribosomal 30S subunits but not for 70S ribosomes. The protein is Ribosome maturation factor RimM of Mycolicibacterium paratuberculosis (strain ATCC BAA-968 / K-10) (Mycobacterium paratuberculosis).